Here is a 283-residue protein sequence, read N- to C-terminus: Elongation factor Ts (283 aa).

The tract at residues 80–83 (TDFV) is involved in Mg(2+) ion dislocation from EF-Tu.

The protein belongs to the EF-Ts family.

The protein localises to the cytoplasm. In terms of biological role, associates with the EF-Tu.GDP complex and induces the exchange of GDP to GTP. It remains bound to the aminoacyl-tRNA.EF-Tu.GTP complex up to the GTP hydrolysis stage on the ribosome. This is Elongation factor Ts from Shigella boydii serotype 18 (strain CDC 3083-94 / BS512).